Here is a 382-residue protein sequence, read N- to C-terminus: Proton extrusion protein PxcA (382 aa).

4 helical membrane-spanning segments follow: residues 156-176 (TLIS…VQQV), 257-277 (AVKN…VCVF), 305-325 (IILF…TVLL), and 340-360 (FILL…KYWI).

The protein belongs to the CemA family.

It is found in the cell inner membrane. Its function is as follows. Required for H(+) efflux immediately after light irradiation to form a rapid H(+) concentration gradient across the thylakoid membranes. Together with PxcL, contributes to transient H(+) uptake following dark to light transition. This is Proton extrusion protein PxcA from Synechococcus sp. (strain WH7803).